A 275-amino-acid chain; its full sequence is Mitochondrial prohibitin complex protein 1 (275 aa).

A coiled-coil region spans residues 180-213 (REFTEAVEMKQVAQQEAEKARYLVEKAEQMKIAA).

The protein belongs to the prohibitin family. High molecular weight complex that consist of phb-1 and phb-2.

The protein resides in the mitochondrion inner membrane. Functionally, PHB proteins are essential during embryonic development and are required for somatic and germline differentiation in the larval gonad. A deficiency in PHB proteins results in altered mitochondrial biogenesis in body wall muscle cells. In Caenorhabditis elegans, this protein is Mitochondrial prohibitin complex protein 1 (phb-1).